The following is a 411-amino-acid chain: Translation initiation factor 2 subunit gamma (411 aa).

The tr-type G domain maps to 9–201 (QPSVNIGMVG…AIEKYIPSPK (193 aa)). Residues 18 to 25 (GHVDHGKS) are G1. Residues Asp21, Ser25, Gly46, and Ser48 each coordinate Mg(2+). 21–26 (DHGKST) serves as a coordination point for GTP. The segment at 46 to 50 (GISIK) is G2. The tract at residues 88–91 (DAPG) is G3. Residues 144–147 (NKID) and 179–181 (SAY) contribute to the GTP site. A G4 region spans residues 144-147 (NKID). Positions 179 to 181 (SAY) are G5.

It belongs to the TRAFAC class translation factor GTPase superfamily. Classic translation factor GTPase family. EIF2G subfamily. Heterotrimer composed of an alpha, a beta and a gamma chain. It depends on Mg(2+) as a cofactor.

The enzyme catalyses GTP + H2O = GDP + phosphate + H(+). EIF-2 functions in the early steps of protein synthesis by forming a ternary complex with GTP and initiator tRNA. The polypeptide is Translation initiation factor 2 subunit gamma (Thermoplasma acidophilum (strain ATCC 25905 / DSM 1728 / JCM 9062 / NBRC 15155 / AMRC-C165)).